The sequence spans 161 residues: Nucleotide-binding protein Daci_4781 (161 aa).

The protein belongs to the YajQ family.

Its function is as follows. Nucleotide-binding protein. The protein is Nucleotide-binding protein Daci_4781 of Delftia acidovorans (strain DSM 14801 / SPH-1).